Here is a 335-residue protein sequence, read N- to C-terminus: Glycerol-3-phosphate dehydrogenase [NAD(P)+] (335 aa).

Positions 15, 16, 36, and 110 each coordinate NADPH. Positions 110, 139, and 141 each coordinate sn-glycerol 3-phosphate. A143 contacts NADPH. Positions 195, 248, 258, 259, and 260 each coordinate sn-glycerol 3-phosphate. The Proton acceptor role is filled by K195. Residue R259 coordinates NADPH. Residues V283 and E285 each contribute to the NADPH site.

Belongs to the NAD-dependent glycerol-3-phosphate dehydrogenase family.

Its subcellular location is the cytoplasm. The catalysed reaction is sn-glycerol 3-phosphate + NAD(+) = dihydroxyacetone phosphate + NADH + H(+). The enzyme catalyses sn-glycerol 3-phosphate + NADP(+) = dihydroxyacetone phosphate + NADPH + H(+). Its pathway is membrane lipid metabolism; glycerophospholipid metabolism. In terms of biological role, catalyzes the reduction of the glycolytic intermediate dihydroxyacetone phosphate (DHAP) to sn-glycerol 3-phosphate (G3P), the key precursor for phospholipid synthesis. The polypeptide is Glycerol-3-phosphate dehydrogenase [NAD(P)+] (Mannheimia succiniciproducens (strain KCTC 0769BP / MBEL55E)).